The following is a 330-amino-acid chain: Lysophospholipase D GDPD3 (330 aa).

Residue Met1 is a topological domain, cytoplasmic. A helical membrane pass occupies residues 2–22 (IPLLYFVLPTLGSYVMLSIFF). The Extracellular segment spans residues 23 to 200 (LRRPHLLHTP…ANPEMPMAFT (178 aa)). Residues 39 to 308 (IRLAAHRGGS…DYPTALRHYL (270 aa)) enclose the GP-PDE domain. Residues Glu71, Asp73, and His86 each coordinate a divalent metal cation. The chain crosses the membrane as a helical span at residues 201–221 (IWRSFWILLLYYLGLLPFVSI). Residues 222–330 (PEKFFFCFLP…EALSCLSLKK (109 aa)) are Cytoplasmic-facing. Positions 311-330 (QEEETQPPQPEALSCLSLKK) are disordered.

The protein belongs to the glycerophosphoryl diester phosphodiesterase family. Highly expressed in stomach and kidney. In stomach detected in the glandular epithelium. Predominantly expressed in the stomach (at protein level).

The protein resides in the membrane. It localises to the cytoplasm. Its subcellular location is the perinuclear region. The protein localises to the endoplasmic reticulum membrane. The catalysed reaction is 1-hexadecanoyl-sn-glycero-3-phosphocholine + H2O = 1-hexadecanoyl-sn-glycero-3-phosphate + choline + H(+). It catalyses the reaction 1-O-hexadecyl-sn-glycero-3-phosphocholine + H2O = 1-O-hexadecyl-sn-glycero-3-phosphate + choline + H(+). It carries out the reaction 1-O-(1Z-octadecenyl)-sn-glycero-3-phospho-N-hexadecanoyl-ethanolamine + H2O = 1-O-(1Z-octadecenyl)-sn-glycero-3-phosphate + N-hexadecanoylethanolamine + H(+). The enzyme catalyses N-(5Z,8Z,11Z,14Z-eicosatetraenoyl)-1-(9Z-octadecenoyl)-sn-glycero-3-phosphoethanolamine + H2O = N-(5Z,8Z,11Z,14Z-eicosatetraenoyl)-ethanolamine + 1-(9Z-octadecenoyl)-sn-glycero-3-phosphate + H(+). The catalysed reaction is N,1-di-(9Z-octadecenoyl)-sn-glycero-3-phosphoethanolamine + H2O = N-(9Z-octadecenoyl) ethanolamine + 1-(9Z-octadecenoyl)-sn-glycero-3-phosphate + H(+). It catalyses the reaction N-hexadecanoyl-1-(9Z-octadecenoyl)-sn-glycero-3-phosphoethanolamine + H2O = N-hexadecanoylethanolamine + 1-(9Z-octadecenoyl)-sn-glycero-3-phosphate + H(+). It carries out the reaction 1-hexadecanoyl-sn-glycero-3-phosphocholine + H2O = sn-glycerol 3-phosphocholine + hexadecanoate + H(+). Its activity is regulated as follows. Lysophospholipase D activity is stimulated by calcium. Loss of lysophospholipase D activity in presence of EDTA. Hydrolyzes lysoglycerophospholipids to produce lysophosphatidic acid (LPA) and the corresponding amines. Shows a preference for 1-O-alkyl-sn-glycero-3-phosphocholine (lyso-PAF), lysophosphatidylcholine (lyso-PC) and N-acylethanolamine lysophospholipids. Does not display glycerophosphodiester phosphodiesterase activity, since it cannot hydrolyze either glycerophosphoinositol or glycerophosphocholine. In Mus musculus (Mouse), this protein is Lysophospholipase D GDPD3.